A 697-amino-acid polypeptide reads, in one-letter code: Elongation factor G (697 aa).

Positions 8–287 (ERVRNIGIAA…AVVDYLPAPT (280 aa)) constitute a tr-type G domain. Residues 17 to 24 (AHIDAGKT), 81 to 85 (DTPGH), and 135 to 138 (NKMD) contribute to the GTP site.

This sequence belongs to the TRAFAC class translation factor GTPase superfamily. Classic translation factor GTPase family. EF-G/EF-2 subfamily.

It localises to the cytoplasm. In terms of biological role, catalyzes the GTP-dependent ribosomal translocation step during translation elongation. During this step, the ribosome changes from the pre-translocational (PRE) to the post-translocational (POST) state as the newly formed A-site-bound peptidyl-tRNA and P-site-bound deacylated tRNA move to the P and E sites, respectively. Catalyzes the coordinated movement of the two tRNA molecules, the mRNA and conformational changes in the ribosome. The polypeptide is Elongation factor G (fusA) (Arthrospira platensis (Spirulina platensis)).